A 621-amino-acid polypeptide reads, in one-letter code: Chaperone protein HscA homolog (621 aa).

The protein belongs to the heat shock protein 70 family.

Chaperone involved in the maturation of iron-sulfur cluster-containing proteins. Has a low intrinsic ATPase activity which is markedly stimulated by HscB. This chain is Chaperone protein HscA homolog, found in Pseudomonas fluorescens (strain Pf0-1).